The primary structure comprises 359 residues: 3-dehydroquinate synthase (359 aa).

Residues 72-77 (EGEIHK), 106-110 (GVIGD), 130-131 (TS), Lys-143, Lys-152, and 170-173 (CLKT) each bind NAD(+). Zn(2+) contacts are provided by Glu-185, His-248, and His-264.

It belongs to the sugar phosphate cyclases superfamily. Dehydroquinate synthase family. It depends on Co(2+) as a cofactor. The cofactor is Zn(2+). NAD(+) is required as a cofactor.

It localises to the cytoplasm. The catalysed reaction is 7-phospho-2-dehydro-3-deoxy-D-arabino-heptonate = 3-dehydroquinate + phosphate. It functions in the pathway metabolic intermediate biosynthesis; chorismate biosynthesis; chorismate from D-erythrose 4-phosphate and phosphoenolpyruvate: step 2/7. Catalyzes the conversion of 3-deoxy-D-arabino-heptulosonate 7-phosphate (DAHP) to dehydroquinate (DHQ). The protein is 3-dehydroquinate synthase of Dehalococcoides mccartyi (strain CBDB1).